A 180-amino-acid polypeptide reads, in one-letter code: Small ribosomal subunit protein bS21c (180 aa).

The transit peptide at 1 to 79 directs the protein to the chloroplast; sequence MASTSSLLNF…PSLAFSNTLY (79 aa). Residues 14-45 are compositionally biased toward low complexity; it reads LFPSNTSLPPSSNPKFPNPNSLSSQQNSISIS. Disordered stretches follow at residues 14–49 and 124–180; these read LFPS…SKKH and NKQE…GAPF. Over residues 130–147 the composition is skewed to basic residues; sequence KRKHREAAKRNSRRRRGP. Over residues 154–166 the composition is skewed to basic and acidic residues; it reads GKEEATKVDKKED.

As to quaternary structure, component of the chloroplast small ribosomal subunit (SSU). Mature 70S chloroplast ribosomes of higher plants consist of a small (30S) and a large (50S) subunit. The 30S small subunit contains 1 molecule of ribosomal RNA (16S rRNA) and 24 different proteins. The 50S large subunit contains 3 rRNA molecules (23S, 5S and 4.5S rRNA) and 33 different proteins. bS21c binds directly to 16S ribosomal RNA.

It is found in the plastid. Its subcellular location is the chloroplast. In terms of biological role, component of the chloroplast ribosome (chloro-ribosome), a dedicated translation machinery responsible for the synthesis of chloroplast genome-encoded proteins, including proteins of the transcription and translation machinery and components of the photosynthetic apparatus. The polypeptide is Small ribosomal subunit protein bS21c (rps21) (Spinacia oleracea (Spinach)).